Here is a 62-residue protein sequence, read N- to C-terminus: Endoregulin (62 aa).

Residues 25–45 form a helical membrane-spanning segment; it reads LAVIILFITAVLLLILFAIVF.

In terms of assembly, homooligomer. Can also form heterooligomers with other sarcoplasmic/endoplasmic reticulum calcium ATPase (SERCA) regulators ARLN, PLN, SLN and STRIT1/DWORF. Monomer. Interacts as a monomer with ATP2A2/SERCA2; the interaction results in inhibition of ATP2A2 Ca(2+) affinity.

It localises to the endoplasmic reticulum membrane. Functionally, inhibits the activity of the calcium ATPases ATP2A2/SERCA2 and ATP2A3/SERCA3 by decreasing their apparent affinity for Ca(2+). The polypeptide is Endoregulin (Homo sapiens (Human)).